The chain runs to 205 residues: Small ribosomal subunit protein uS4 (205 aa).

Positions 19–45 are disordered; that stretch reads IWGRSKSPVNRREYGPGQHGQRRKGKL. The 64-residue stretch at 94–157 folds into the S4 RNA-binding domain; it reads RRLDAVVYRA…KQMALVLEAV (64 aa).

This sequence belongs to the universal ribosomal protein uS4 family. Part of the 30S ribosomal subunit. Contacts protein S5. The interaction surface between S4 and S5 is involved in control of translational fidelity.

One of the primary rRNA binding proteins, it binds directly to 16S rRNA where it nucleates assembly of the body of the 30S subunit. Its function is as follows. With S5 and S12 plays an important role in translational accuracy. This chain is Small ribosomal subunit protein uS4, found in Azorhizobium caulinodans (strain ATCC 43989 / DSM 5975 / JCM 20966 / LMG 6465 / NBRC 14845 / NCIMB 13405 / ORS 571).